Here is a 244-residue protein sequence, read N- to C-terminus: NAD(P)H-quinone oxidoreductase subunit K (244 aa).

[4Fe-4S] cluster-binding residues include cysteine 60, cysteine 61, cysteine 125, and cysteine 156. Residues 213–244 (KSEKSIESSKLNPVEESSENIYETNSIDEVIK) are disordered. Residues 231–244 (ENIYETNSIDEVIK) show a composition bias toward polar residues.

This sequence belongs to the complex I 20 kDa subunit family. In terms of assembly, NDH-1 can be composed of about 15 different subunits; different subcomplexes with different compositions have been identified which probably have different functions. It depends on [4Fe-4S] cluster as a cofactor.

The protein localises to the cellular thylakoid membrane. It carries out the reaction a plastoquinone + NADH + (n+1) H(+)(in) = a plastoquinol + NAD(+) + n H(+)(out). The catalysed reaction is a plastoquinone + NADPH + (n+1) H(+)(in) = a plastoquinol + NADP(+) + n H(+)(out). In terms of biological role, NDH-1 shuttles electrons from an unknown electron donor, via FMN and iron-sulfur (Fe-S) centers, to quinones in the respiratory and/or the photosynthetic chain. The immediate electron acceptor for the enzyme in this species is believed to be plastoquinone. Couples the redox reaction to proton translocation, and thus conserves the redox energy in a proton gradient. Cyanobacterial NDH-1 also plays a role in inorganic carbon-concentration. The sequence is that of NAD(P)H-quinone oxidoreductase subunit K from Prochlorococcus marinus subsp. pastoris (strain CCMP1986 / NIES-2087 / MED4).